The chain runs to 595 residues: 73 kDa paraflagellar rod protein (595 aa).

The tract at residues 294–317 (DAEATKRHAANKEKSDRYIRENED) is disordered. The tract at residues 317-337 (DRQEETWNKIQDLERQLQKLG) is calmodulin-binding.

As to quaternary structure, heterodimer of a 69 kDa and a 73 kDa protein.

Its subcellular location is the cell projection. The protein resides in the cilium. The protein localises to the flagellum. It localises to the cytoplasm. It is found in the cytoskeleton. Its function is as follows. Major component of the paraflagellar rod (PFR). The PFR is a highly ordered lattices of fibrous proteins that are located inside the flagellum and assume a fixed orientation with respect to the microtubular axoneme. In Trypanosoma brucei brucei, this protein is 73 kDa paraflagellar rod protein (PFRC).